The chain runs to 147 residues: uncharacterized protein (147 aa).

An N-terminal signal peptide occupies residues 1–21 (MRTIFVGVLLLAIMGEGRLCA).

This is an uncharacterized protein from Treponema pallidum (strain Nichols).